The primary structure comprises 144 residues: Transcription antitermination protein NusB (144 aa).

The protein belongs to the NusB family.

Functionally, involved in transcription antitermination. Required for transcription of ribosomal RNA (rRNA) genes. Binds specifically to the boxA antiterminator sequence of the ribosomal RNA (rrn) operons. In Haemophilus influenzae (strain PittGG), this protein is Transcription antitermination protein NusB.